The following is a 448-amino-acid chain: Beta-glucosidase A (448 aa).

Residue E166 is the Proton donor of the active site. Residue E352 is the Nucleophile of the active site.

The protein belongs to the glycosyl hydrolase 1 family. In terms of assembly, homooctamer.

It carries out the reaction Hydrolysis of terminal, non-reducing beta-D-glucosyl residues with release of beta-D-glucose.. Its function is as follows. BglA is intracellular and cleaves cellobiose probably through inorganic phosphate mediated hydrolysis. This chain is Beta-glucosidase A (bglA), found in Paenibacillus polymyxa (Bacillus polymyxa).